The following is a 262-amino-acid chain: Type II restriction enzyme HinfI (262 aa).

The catalysed reaction is Endonucleolytic cleavage of DNA to give specific double-stranded fragments with terminal 5'-phosphates.. In terms of biological role, a P subtype restriction enzyme that recognizes the double-stranded sequence 5'-GANTC-3' and cleaves after G-1. This Haemophilus influenzae protein is Type II restriction enzyme HinfI (hinfIR).